A 381-amino-acid chain; its full sequence is MLGNKMLSLPEQQPTLKIINSALVDLPVPANISIWWNFGSLLGLCLLIQIVIGLFLAMHYTAWVELAFSSVANICRDVNYGWLLRTVHANGASFFFICIYFHIGRGMYYGSFHYFETWMTGIALLFLVMAAAFLGYVLPWGQMSFWGATVITNLVSAVPYIGNDVVQWLWGGFAVDNPTLTRFFTFHFLIPFLVAGLTMIHLLFLHQSGSNNPLGINANLDKLPFHPYFTIKDTVGFMVLIFFLVTLSLTSPYLLGDPDNFIPANPLVTPAHIQPEWYFLFAYAILRSIPNKLGGVIALVSSILILVSLPFTFKPKFRGLEFYSVAQPLFWSWVSVFLLLTWIGARPVEDPYNFLGQILTCAYFSYFVFTPIVINLNDKIV.

A run of 4 helical transmembrane segments spans residues 38–58 (FGSL…FLAM), 82–103 (WLLR…YFHI), 118–138 (WMTG…GYVL), and 183–203 (FFTF…IHLL). Residues His88 and His102 each coordinate heme b. Heme b is bound by residues His187 and His201. An a ubiquinone-binding site is contributed by His206. 4 consecutive transmembrane segments (helical) span residues 231–251 (IKDT…SLTS), 293–313 (LGGV…PFTF), 325–345 (VAQP…WIGA), and 352–372 (YNFL…FTPI).

This sequence belongs to the cytochrome b family. In terms of assembly, the main subunits of complex b-c1 are: cytochrome b, cytochrome c1 and the Rieske protein. The cofactor is heme b.

Its subcellular location is the mitochondrion inner membrane. Its function is as follows. Component of the ubiquinol-cytochrome c reductase complex (complex III or cytochrome b-c1 complex) that is part of the mitochondrial respiratory chain. The b-c1 complex mediates electron transfer from ubiquinol to cytochrome c. Contributes to the generation of a proton gradient across the mitochondrial membrane that is then used for ATP synthesis. This Artemia franciscana (Brine shrimp) protein is Cytochrome b (MT-CYB).